We begin with the raw amino-acid sequence, 123 residues long: Ribonuclease P protein component (123 aa).

Belongs to the RnpA family. As to quaternary structure, consists of a catalytic RNA component (M1 or rnpB) and a protein subunit.

It catalyses the reaction Endonucleolytic cleavage of RNA, removing 5'-extranucleotides from tRNA precursor.. Functionally, RNaseP catalyzes the removal of the 5'-leader sequence from pre-tRNA to produce the mature 5'-terminus. It can also cleave other RNA substrates such as 4.5S RNA. The protein component plays an auxiliary but essential role in vivo by binding to the 5'-leader sequence and broadening the substrate specificity of the ribozyme. The polypeptide is Ribonuclease P protein component (Streptococcus pneumoniae (strain JJA)).